The following is a 156-amino-acid chain: Lipoprotein signal peptidase (156 aa).

Residues 62 to 82 (GNTVFMVLSAVIIAILSYTKI) form a helical membrane-spanning segment. Residues Asp115 and Asp133 contribute to the active site. A helical membrane pass occupies residues 126–146 (WPAFNLADLTITCGVIVFLAM).

Belongs to the peptidase A8 family.

The protein localises to the cell inner membrane. It carries out the reaction Release of signal peptides from bacterial membrane prolipoproteins. Hydrolyzes -Xaa-Yaa-Zaa-|-(S,diacylglyceryl)Cys-, in which Xaa is hydrophobic (preferably Leu), and Yaa (Ala or Ser) and Zaa (Gly or Ala) have small, neutral side chains.. The protein operates within protein modification; lipoprotein biosynthesis (signal peptide cleavage). This protein specifically catalyzes the removal of signal peptides from prolipoproteins. This is Lipoprotein signal peptidase from Anaplasma phagocytophilum (strain HZ).